Here is a 400-residue protein sequence, read N- to C-terminus: Phosphoglycerate kinase (400 aa).

Substrate is bound by residues 24 to 26 (DFN), Arg39, 62 to 65 (HLGK), Arg123, and Arg156. ATP contacts are provided by residues Lys207, Gly298, Glu329, and 356 to 359 (GGDS).

This sequence belongs to the phosphoglycerate kinase family. Monomer.

Its subcellular location is the cytoplasm. It catalyses the reaction (2R)-3-phosphoglycerate + ATP = (2R)-3-phospho-glyceroyl phosphate + ADP. Its pathway is carbohydrate degradation; glycolysis; pyruvate from D-glyceraldehyde 3-phosphate: step 2/5. In Clostridioides difficile (strain 630) (Peptoclostridium difficile), this protein is Phosphoglycerate kinase.